The sequence spans 137 residues: MSIIKEFREFAMRGNVVDLAVGVIIGAAFGKIVSSLVSDIIMPPLGLLIGGVDFKQFSLILRDAQGEVPAVVMNYGAFIQNIFDFVIVAFAIFMAIKLMNKLRRKQEDEPAAPPKPSAEEKLLAEIRDLLKEQQPKQ.

A run of 2 helical transmembrane segments spans residues 10-30 (FAMRGNVVDLAVGVIIGAAFG) and 76-96 (GAFIQNIFDFVIVAFAIFMAI).

Belongs to the MscL family. As to quaternary structure, homopentamer.

The protein resides in the cell inner membrane. Its function is as follows. Channel that opens in response to stretch forces in the membrane lipid bilayer. May participate in the regulation of osmotic pressure changes within the cell. The chain is Large-conductance mechanosensitive channel from Pectobacterium carotovorum subsp. carotovorum (strain PC1).